A 312-amino-acid chain; its full sequence is Ornithine carbamoyltransferase (312 aa).

Carbamoyl phosphate is bound by residues 57–60 (STRT), Gln-84, Arg-108, and 135–138 (HPCQ). L-ornithine is bound by residues Asn-166, Asp-226, and 230–231 (SM). Carbamoyl phosphate is bound by residues 265-266 (CL) and Arg-293.

The protein belongs to the aspartate/ornithine carbamoyltransferase superfamily. OTCase family.

It localises to the cytoplasm. It carries out the reaction carbamoyl phosphate + L-ornithine = L-citrulline + phosphate + H(+). It functions in the pathway amino-acid biosynthesis; L-arginine biosynthesis; L-arginine from L-ornithine and carbamoyl phosphate: step 1/3. In terms of biological role, reversibly catalyzes the transfer of the carbamoyl group from carbamoyl phosphate (CP) to the N(epsilon) atom of ornithine (ORN) to produce L-citrulline. In Brucella suis biovar 1 (strain 1330), this protein is Ornithine carbamoyltransferase.